A 276-amino-acid chain; its full sequence is MLDAEQKKNYVAGAFGEFVGTAYFLFMGVGGAVNFLNNAAGSPLPGFAIPFCFGFSLFVNVFIWAPISGGVFNPSITIALMATNPKDFPWYRGILYIVSQFLGALFGSWLIDLIQPEAPNAATLLADGVSVAQGLFMEMFATSVLTMAVLILAGERYGKYLAPFGIGMSLFISALCAGPYTGASLNPARTLGPAIVANQYGRAHWIYYVGPTLGSLLAAGYWHILRILNIDVVDLKNVLNKCKKCGKEDPRISLKHCEECLKDDPKPEKYDIESQN.

Topologically, residues 1–10 are cytoplasmic; the sequence is MLDAEQKKNY. Residues 11–31 traverse the membrane as a helical segment; sequence VAGAFGEFVGTAYFLFMGVGG. Residues 32–46 are Extracellular-facing; it reads AVNFLNNAAGSPLPG. A helical transmembrane segment spans residues 47–67; sequence FAIPFCFGFSLFVNVFIWAPI. Residues 68 to 93 are Cytoplasmic-facing; sequence SGGVFNPSITIALMATNPKDFPWYRG. Positions 73–75 match the NPA 1 motif; the sequence is NPS. Residues 94-114 traverse the membrane as a helical segment; that stretch reads ILYIVSQFLGALFGSWLIDLI. The Extracellular portion of the chain corresponds to 115–133; it reads QPEAPNAATLLADGVSVAQ. The chain crosses the membrane as a helical span at residues 134–154; sequence GLFMEMFATSVLTMAVLILAG. The Cytoplasmic portion of the chain corresponds to 155 to 159; the sequence is ERYGK. The helical transmembrane segment at 160-180 threads the bilayer; sequence YLAPFGIGMSLFISALCAGPY. Residues 181–204 lie on the Extracellular side of the membrane; it reads TGASLNPARTLGPAIVANQYGRAH. An NPA 2 motif is present at residues 186–188; it reads NPA. The helical transmembrane segment at 205–225 threads the bilayer; the sequence is WIYYVGPTLGSLLAAGYWHIL. Topologically, residues 226–276 are cytoplasmic; sequence RILNIDVVDLKNVLNKCKKCGKEDPRISLKHCEECLKDDPKPEKYDIESQN.

It belongs to the MIP/aquaporin (TC 1.A.8) family.

Its subcellular location is the cell membrane. The catalysed reaction is H2O(in) = H2O(out). Polyethylene glycol (PEG) stimulates whereas glycerol inhibits the aquaporin activity. Its function is as follows. Water channel required to facilitate the transport of water across membranes. Stimulates plant drought tolerance by facilitating the transport of water from the arbuscular mycorrhiza fungus to host plants. The sequence is that of Aquaporin-1 from Rhizophagus irregularis (Arbuscular mycorrhizal fungus).